We begin with the raw amino-acid sequence, 177 residues long: Chorismate pyruvate-lyase (177 aa).

Substrate contacts are provided by Met36, Arg78, Leu116, and Glu157.

The protein belongs to the UbiC family. In terms of assembly, monomer.

The protein resides in the cytoplasm. It carries out the reaction chorismate = 4-hydroxybenzoate + pyruvate. The protein operates within cofactor biosynthesis; ubiquinone biosynthesis. Its function is as follows. Removes the pyruvyl group from chorismate, with concomitant aromatization of the ring, to provide 4-hydroxybenzoate (4HB) for the ubiquinone pathway. This chain is Chorismate pyruvate-lyase, found in Pectobacterium carotovorum subsp. carotovorum (strain PC1).